Here is a 373-residue protein sequence, read N- to C-terminus: MLYWLFDSWLSQFYSPFSAVSSVTLRTLLTVITSLAFSIILGPRTIAYLRSVKYDQAVRDDGPKTHLAKTGTPTMGGVLILTSIGFSTLCWANLANPYVWILMVVMVIFGAVGWADDWLKIKYKNPKGLIARKKYFWLSVGALFVGSSLYYIASQQPDPAQTKAMVDLLIPLFKNWIVPLSALPLGLGFIIFTYFVINGSSNAVNLTDGLDGLAILPVVFVAAGLGVFSYVSGDVRFADYLHVPYIAYNSEVTIVCAAMIGSGLGFLWYNAHPAQVFMGDVGALALGAMLGTIAVMTRQEIAFAIMGGLFVAEALSVILQVGSFKLRKKRVLLMAPLHHHFEELGWKETQVVVRFWIIAILLVVLGLMTLKLR.

Transmembrane regions (helical) follow at residues 28–48 (LLTV…TIAY), 72–92 (TPTM…LCWA), 94–114 (LANP…AVGW), 135–155 (YFWL…IASQ), 177–197 (IVPL…YFVI), 212–232 (GLAI…SYVS), 252–272 (VTIV…YNAH), 276–296 (VFMG…IAVM), 301–321 (IAFA…ILQV), and 350–370 (QVVV…LMTL).

Belongs to the glycosyltransferase 4 family. MraY subfamily. Mg(2+) is required as a cofactor.

It is found in the cell inner membrane. It carries out the reaction UDP-N-acetyl-alpha-D-muramoyl-L-alanyl-gamma-D-glutamyl-meso-2,6-diaminopimeloyl-D-alanyl-D-alanine + di-trans,octa-cis-undecaprenyl phosphate = di-trans,octa-cis-undecaprenyl diphospho-N-acetyl-alpha-D-muramoyl-L-alanyl-D-glutamyl-meso-2,6-diaminopimeloyl-D-alanyl-D-alanine + UMP. It functions in the pathway cell wall biogenesis; peptidoglycan biosynthesis. Catalyzes the initial step of the lipid cycle reactions in the biosynthesis of the cell wall peptidoglycan: transfers peptidoglycan precursor phospho-MurNAc-pentapeptide from UDP-MurNAc-pentapeptide onto the lipid carrier undecaprenyl phosphate, yielding undecaprenyl-pyrophosphoryl-MurNAc-pentapeptide, known as lipid I. The sequence is that of Phospho-N-acetylmuramoyl-pentapeptide-transferase from Psychrobacter sp. (strain PRwf-1).